The sequence spans 386 residues: Alkanesulfonate monooxygenase (386 aa).

The protein belongs to the SsuD family.

It carries out the reaction an alkanesulfonate + FMNH2 + O2 = an aldehyde + FMN + sulfite + H2O + 2 H(+). Catalyzes the desulfonation of aliphatic sulfonates. In Delftia acidovorans (strain DSM 14801 / SPH-1), this protein is Alkanesulfonate monooxygenase.